A 398-amino-acid polypeptide reads, in one-letter code: Methionine aminopeptidase 1A (398 aa).

The residue at position 2 (A2) is an N-acetylalanine. A C6H2-type zinc finger spans residues 12–65; it reads TLSCARCEKPAHLQCPKCIDLKLPREQASFCTQECFKAAWSSHKSVHVKAQLSS. The Zn(2+) site is built by C15, C18, C26, C29, C42, C46, H54, and H58. H214 contacts a protein. 3 residues coordinate Zn(2+): D231, D242, and H305. An a protein-binding site is contributed by H312. Zn(2+)-binding residues include E338 and E369.

Belongs to the peptidase M24A family. Methionine aminopeptidase type 1 subfamily. Associates with the 60S ribosomal subunit of the 80S translational complex. Zn(2+) serves as cofactor. Co(2+) is required as a cofactor. The cofactor is Mn(2+). It depends on Fe(2+) as a cofactor. As to expression, ubiquitous.

It is found in the cytoplasm. The catalysed reaction is Release of N-terminal amino acids, preferentially methionine, from peptides and arylamides.. Its function is as follows. Cotranslationally removes the N-terminal methionine from nascent proteins. The N-terminal methionine is often cleaved when the second residue in the primary sequence is small and uncharged (Met-Ala-, Cys, Gly, Pro, Ser, Thr, or Val). This Arabidopsis thaliana (Mouse-ear cress) protein is Methionine aminopeptidase 1A (MAP1A).